The chain runs to 303 residues: Recombination-associated protein RdgC (303 aa).

It belongs to the RdgC family.

Its subcellular location is the cytoplasm. The protein localises to the nucleoid. Functionally, may be involved in recombination. This is Recombination-associated protein RdgC from Enterobacter sp. (strain 638).